Consider the following 243-residue polypeptide: Small ribosomal subunit protein eS4 (243 aa).

The 63-residue stretch at Ile-43–Asn-105 folds into the S4 RNA-binding domain.

Belongs to the eukaryotic ribosomal protein eS4 family. As to quaternary structure, part of the 30S ribosomal subunit.

The chain is Small ribosomal subunit protein eS4 from Pyrococcus furiosus (strain ATCC 43587 / DSM 3638 / JCM 8422 / Vc1).